The following is a 693-amino-acid chain: MAREFSLEKTRNIGIMAHVDAGKTTTTERILYYTGKIHKIGETHEGASQMDWMEQEQERGITITSAATTAQWNNHRVNIIDTPGHVDFTIEVQRSLRVLDGAVTVLDSQSGVEPQTETVWRQATEYGVPRIVFANKMDKIGADFLYSVSTLHDRLQANAHPIQLPIGSEDDFRGIIDLIKMKAEIYTNDLGTDILEEDIPAEYLDQAQEYREKLVEAVAETDEELMMKYLEGEEITNEELKAGIRKATINVEFFPVLCGSAFKNKGVQLMLDAVIDYLPSPLDIPAIKGINPDTDEEETRPASDEEPFAALAFKIMTDPFVGRLTFFRVYSGVLQSGSYVLNTSKGKRERIGRILQMHANSRQEIDTVYSGDIAAAVGLKDTTTGDSLTDEKAKIILESINVPEPVIQLMVEPKSKADQDKMGIALQKLAEEDPTFRVETNVETGETVISGMGELHLDVLVDRMRREFKVEANVGAPQVSYRETFRASTQARGFFKRQSGGKGQFGDVWIEFTPNEEGKGFEFENAIVGGVVPREFIPAVEKGLVESMANGVLAGYPMVDVKAKLYDGSYHDVDSSETAFKIAASLALKEAAKSAQPAILEPMMLVTITVPEENLGDVMGHVTARRGRVDGMEAHGNSQIVRAYVPLAEMFGYATVLRSASQGRGTFMMVFDHYEDVPKSVQEEIIKKNKGED.

The tr-type G domain occupies 8–282 (EKTRNIGIMA…AVIDYLPSPL (275 aa)). GTP is bound by residues 17–24 (AHVDAGKT), 81–85 (DTPGH), and 135–138 (NKMD).

It belongs to the TRAFAC class translation factor GTPase superfamily. Classic translation factor GTPase family. EF-G/EF-2 subfamily.

It localises to the cytoplasm. In terms of biological role, catalyzes the GTP-dependent ribosomal translocation step during translation elongation. During this step, the ribosome changes from the pre-translocational (PRE) to the post-translocational (POST) state as the newly formed A-site-bound peptidyl-tRNA and P-site-bound deacylated tRNA move to the P and E sites, respectively. Catalyzes the coordinated movement of the two tRNA molecules, the mRNA and conformational changes in the ribosome. This Streptococcus pneumoniae (strain ATCC 700669 / Spain 23F-1) protein is Elongation factor G.